Reading from the N-terminus, the 619-residue chain is Chaperone protein DnaK (619 aa).

Thr-179 is subject to Phosphothreonine; by autocatalysis. Residues 584–619 (QAKAQGAAGPQPGAQAQGQPNDGGKEDVVEAEVVDK) form a disordered region. A compositionally biased stretch (low complexity) spans 585-605 (AKAQGAAGPQPGAQAQGQPND). The segment covering 606–619 (GGKEDVVEAEVVDK) has biased composition (basic and acidic residues).

Belongs to the heat shock protein 70 family.

In terms of biological role, acts as a chaperone. The polypeptide is Chaperone protein DnaK (Elusimicrobium minutum (strain Pei191)).